A 507-amino-acid chain; its full sequence is Myocyte-specific enhancer factor 2A (507 aa).

The region spanning 3 to 57 (RKKIQITRIMDERNRQVTFTKRKFGLMKKAYELSVLCDCEIALIIFNSSNKLFQY) is the MADS-box domain. A DNA-binding region (mef2-type) is located at residues 58–86 (ASTDMDKVLLKYTEYNEPHESGTNSDIVE). Position 59 is a phosphoserine; by CK2 (serine 59). Residues serine 98 and serine 235 each carry the phosphoserine modification. The interval 175–269 (ADSSMLSPPQ…GGGNLGMNSR (95 aa)) is disordered. Positions 209–245 (LSTSDLTVPNGAGSSPVGNGFVNSRASPNLVGTTGAN) are enriched in polar residues. The residue at position 249 (lysine 249) is an N6-acetyllysine. Serine 255 carries the post-translational modification Phosphoserine. A required for interaction with MAPKs region spans residues 266 to 283 (MNSRKPDLRVVIPPSSKG). A beta domain region spans residues 289–296 (SEEEELEL). Threonine 312 and threonine 319 each carry phosphothreonine; by MAPK7 and MAPK14. Serine 355 carries the phosphoserine; by MAPK7 modification. The span at 390-402 (SNLSINTNQNINI) shows a compositional bias: polar residues. The segment at 390–507 (SNLSINTNQN…KRMRMDAWVT (118 aa)) is disordered. At lysine 403 the chain carries N6-acetyllysine; alternate. Lysine 403 participates in a covalent cross-link: Glycyl lysine isopeptide (Lys-Gly) (interchain with G-Cter in SUMO); alternate. Serine 408 carries the phosphoserine; by CDK5 modification. A Phosphothreonine modification is found at threonine 415. Over residues 423–443 (QPPPPSQAPQPQPPQPQPQPQ) the composition is skewed to pro residues. At serine 453 the chain carries Phosphoserine. A compositionally biased stretch (low complexity) spans 453-466 (SPVDSLSSSSSSYD). Basic and acidic residues-rich tracts occupy residues 467–477 (GSDREDPRGDF) and 488–507 (NTED…AWVT).

Belongs to the MEF2 family. In terms of assembly, binds DNA as a homo- or heterodimer. Dimerizes with MEF2D. Interacts with HDAC7. Interacts with PIAS1; the interaction enhances sumoylation. Interacts with HDAC4, HDAC9 and SLC2A4RG. Interacts (via the N-terminal) with MAPK7; the interaction results in the phosphorylation and transcriptional activity of MEF2A. Post-translationally, constitutive phosphorylation on Ser-408 promotes Lys-403 sumoylation thus preventing acetylation at this site. Dephosphorylation on Ser-408 by PPP3CA upon neuron depolarization promotes a switch from sumoylation to acetylation on residue Lys-403 leading to inhibition of dendrite claw differentiation. Phosphorylation on Thr-312 and Thr-319 are the main sites involved in p38 MAPK signaling and activate transcription. Phosphorylated on these sites by MAPK14/p38alpha and MAPK11/p38beta, but not by MAPK13/p38delta nor by MAPK12/p38gamma. Phosphorylation on Ser-408 by CDK5 induced by neurotoxicity inhibits MEF2A transcriptional activation leading to apoptosis of cortical neurons. Phosphorylation on Thr-312, Thr-319 and Ser-355 can be induced by EGF. In terms of processing, sumoylation on Lys-403 is enhanced by PIAS1 and represses transcriptional activity. Phosphorylation on Ser-408 is required for sumoylation. Has no effect on nuclear location nor on DNA binding. Sumoylated with SUMO1 and, to a lesser extent with SUMO2 and SUMO3. PIASx facilitates sumoylation in postsynaptic dendrites in the cerebellar cortex and promotes their morphogenesis. Acetylation on Lys-403 activates transcriptional activity. Acetylated by p300 on several sites in diffentiating myocytes. Acetylation on Lys-4 increases DNA binding and transactivation. Hyperacetylation by p300 leads to enhanced cardiac myocyte growth and heart failure. Post-translationally, proteolytically cleaved on several sites by caspase 3 and caspase 7 following neurotoxicity. Preferentially cleaves the CDK5-mediated hyperphosphorylated form which leads to cortical neuron apoptosis and transcriptional inactivation.

Its subcellular location is the nucleus. Functionally, transcriptional activator which binds specifically to the MEF2 element, 5'-YTA[AT](4)TAR-3', found in numerous muscle-specific genes. Also involved in the activation of numerous growth factor- and stress-induced genes. Mediates cellular functions not only in skeletal and cardiac muscle development, but also in neuronal differentiation and survival. Plays diverse roles in the control of cell growth, survival and apoptosis via p38 MAPK signaling in muscle-specific and/or growth factor-related transcription. In cerebellar granule neurons, phosphorylated and sumoylated MEF2A represses transcription of NUR77 promoting synaptic differentiation. Associates with chromatin to the ZNF16 promoter. The protein is Myocyte-specific enhancer factor 2A (MEF2A) of Sus scrofa (Pig).